We begin with the raw amino-acid sequence, 129 residues long: MKVVKLEDVIGTEQEVKGENWTSRRLLLKKDGMGYSVHDTIIKAGTETHIWYQNHLEAVYCIEGEGEVETVKDGKVWPIKANEIYALDEHDEHLLRAKTDMRMVCVFNPPITGKETHDENGVYPLVDDE.

Belongs to the ectoine synthase family.

It carries out the reaction (2S)-4-acetamido-2-aminobutanoate = L-ectoine + H2O. The protein operates within amine and polyamine biosynthesis; ectoine biosynthesis; L-ectoine from L-aspartate 4-semialdehyde: step 3/3. Its function is as follows. Catalyzes the circularization of gamma-N-acetyl-alpha,gamma-diaminobutyric acid (ADABA) to ectoine (1,4,5,6-tetrahydro-2-methyl-4-pyrimidine carboxylic acid), which is an excellent osmoprotectant. This is L-ectoine synthase from Halalkalibacterium halodurans (strain ATCC BAA-125 / DSM 18197 / FERM 7344 / JCM 9153 / C-125) (Bacillus halodurans).